A 198-amino-acid polypeptide reads, in one-letter code: HTH-type transcriptional regulator BetI (198 aa).

Residues 8–68 (PLRRRELIDA…ATMRHLLREL (61 aa)) enclose the HTH tetR-type domain. Residues 31–50 (TVAQIAHEAGVSPALAHHYF) constitute a DNA-binding region (H-T-H motif).

The protein operates within amine and polyamine biosynthesis; betaine biosynthesis via choline pathway [regulation]. Its function is as follows. Repressor involved in the biosynthesis of the osmoprotectant glycine betaine. It represses transcription of the choline transporter BetT and the genes of BetAB involved in the synthesis of glycine betaine. This chain is HTH-type transcriptional regulator BetI, found in Brucella suis (strain ATCC 23445 / NCTC 10510).